Reading from the N-terminus, the 127-residue chain is Fluoride-specific ion channel FluC (127 aa).

Transmembrane regions (helical) follow at residues 4 to 24 (LLLA…MLSM), 35 to 55 (LGTL…FAWF), 71 to 91 (TGFC…VFLL), and 103 to 123 (VLVN…IFSA). The Na(+) site is built by glycine 75 and threonine 78.

It belongs to the fluoride channel Fluc/FEX (TC 1.A.43) family.

Its subcellular location is the cell inner membrane. It catalyses the reaction fluoride(in) = fluoride(out). With respect to regulation, na(+) is not transported, but it plays an essential structural role and its presence is essential for fluoride channel function. Its function is as follows. Fluoride-specific ion channel. Important for reducing fluoride concentration in the cell, thus reducing its toxicity. This Escherichia fergusonii (strain ATCC 35469 / DSM 13698 / CCUG 18766 / IAM 14443 / JCM 21226 / LMG 7866 / NBRC 102419 / NCTC 12128 / CDC 0568-73) protein is Fluoride-specific ion channel FluC.